Consider the following 170-residue polypeptide: Putative 4-hydroxy-4-methyl-2-oxoglutarate aldolase (170 aa).

Substrate contacts are provided by residues 81 to 84 and arginine 103; that span reads GDII. Aspartate 104 is a binding site for a divalent metal cation.

Belongs to the class II aldolase/RraA-like family. Homotrimer. A divalent metal cation serves as cofactor.

It carries out the reaction 4-hydroxy-4-methyl-2-oxoglutarate = 2 pyruvate. It catalyses the reaction oxaloacetate + H(+) = pyruvate + CO2. Catalyzes the aldol cleavage of 4-hydroxy-4-methyl-2-oxoglutarate (HMG) into 2 molecules of pyruvate. Also contains a secondary oxaloacetate (OAA) decarboxylase activity due to the common pyruvate enolate transition state formed following C-C bond cleavage in the retro-aldol and decarboxylation reactions. The polypeptide is Putative 4-hydroxy-4-methyl-2-oxoglutarate aldolase (Corynebacterium efficiens (strain DSM 44549 / YS-314 / AJ 12310 / JCM 11189 / NBRC 100395)).